Here is a 235-residue protein sequence, read N- to C-terminus: Proteasome subunit alpha (235 aa).

Belongs to the peptidase T1A family. The 20S proteasome core is composed of 14 alpha and 14 beta subunits that assemble into four stacked heptameric rings, resulting in a barrel-shaped structure. The two inner rings, each composed of seven catalytic beta subunits, are sandwiched by two outer rings, each composed of seven alpha subunits. The catalytic chamber with the active sites is on the inside of the barrel. Has a gated structure, the ends of the cylinder being occluded by the N-termini of the alpha-subunits. Is capped by the proteasome-associated ATPase, ARC.

The protein resides in the cytoplasm. It participates in protein degradation; proteasomal Pup-dependent pathway. With respect to regulation, the formation of the proteasomal ATPase ARC-20S proteasome complex, likely via the docking of the C-termini of ARC into the intersubunit pockets in the alpha-rings, may trigger opening of the gate for substrate entry. Interconversion between the open-gate and close-gate conformations leads to a dynamic regulation of the 20S proteasome proteolysis activity. Component of the proteasome core, a large protease complex with broad specificity involved in protein degradation. This Arthrobacter sp. (strain FB24) protein is Proteasome subunit alpha.